The primary structure comprises 135 residues: Putative pre-16S rRNA nuclease (135 aa).

This sequence belongs to the YqgF nuclease family.

Its subcellular location is the cytoplasm. Could be a nuclease involved in processing of the 5'-end of pre-16S rRNA. This is Putative pre-16S rRNA nuclease from Maridesulfovibrio salexigens (strain ATCC 14822 / DSM 2638 / NCIMB 8403 / VKM B-1763) (Desulfovibrio salexigens).